A 346-amino-acid polypeptide reads, in one-letter code: Sulfate/thiosulfate import ATP-binding protein CysA 1 (346 aa).

The region spanning 3–237 (VKVSGITKQF…PNSPFVFSFI (235 aa)) is the ABC transporter domain. 35-42 (GPSGSGKT) contacts ATP.

The protein belongs to the ABC transporter superfamily. Sulfate/tungstate importer (TC 3.A.1.6) family. The complex is composed of two ATP-binding proteins (CysA), two transmembrane proteins (CysT and CysW) and a solute-binding protein (CysP).

It localises to the cell inner membrane. It catalyses the reaction sulfate(out) + ATP + H2O = sulfate(in) + ADP + phosphate + H(+). It carries out the reaction thiosulfate(out) + ATP + H2O = thiosulfate(in) + ADP + phosphate + H(+). Part of the ABC transporter complex CysAWTP involved in sulfate/thiosulfate import. Responsible for energy coupling to the transport system. The chain is Sulfate/thiosulfate import ATP-binding protein CysA 1 from Agrobacterium fabrum (strain C58 / ATCC 33970) (Agrobacterium tumefaciens (strain C58)).